A 545-amino-acid chain; its full sequence is Probable target of rapamycin complex 2 subunit BIT2 (545 aa).

Disordered stretches follow at residues 1 to 24 (MATD…PNIK) and 78 to 166 (DGSN…GTSS). 3 stretches are compositionally biased toward polar residues: residues 11-24 (ATSG…PNIK), 106-130 (IGSS…SNSR), and 151-166 (RSGS…GTSS).

As to quaternary structure, interacts with the target of rapamycin complex 2 (TORC2) subunit TSC11 and the TORC2 effectors SLM1 and SLM2.

The protein is Probable target of rapamycin complex 2 subunit BIT2 (BIT2) of Saccharomyces cerevisiae (strain ATCC 204508 / S288c) (Baker's yeast).